Reading from the N-terminus, the 1370-residue chain is Reverse gyrase 1 (1370 aa).

The segment at 6-47 (AASRGVYRYLCPNCGGPNSEERLSRGLPCPRCLPRLPRKGVS) adopts an RG N-terminal-type zinc-finger fold. Residues Cys-16, Cys-19, Cys-34, and Cys-37 each coordinate Zn(2+). ATP is bound by residues Gln-95 and 112–119 (APTGVGKT). The 189-residue stretch at 99–287 (AKRLARGDSF…RKKLLEVKRR (189 aa)) folds into the Helicase ATP-binding domain. The short motif at 220 to 223 (DDVD) is the DEAD box element. The tract at residues 643 to 1370 (ELVRTALLVV…VSRVWGAGVG (728 aa)) is topoisomerase I. Residues 647–825 (TALLVVESPN…DIKRLEFHEV (179 aa)) enclose the Toprim domain. Glu-653 contributes to the Mg(2+) binding site. The segment at 744-772 (IKRCLDCGYQFVDEASRCPRCGSELIRNS) adopts an RG C-terminal-type zinc-finger fold. Zn(2+)-binding residues include Cys-747, Cys-750, Cys-761, and Cys-764. Asp-794 is a binding site for Mg(2+). The region spanning 841–1323 (DDNLVDAQVV…SVFNEISDLA (483 aa)) is the Topo IA-type catalytic domain. Catalysis depends on Tyr-1028, which acts as the O-(5'-phospho-DNA)-tyrosine intermediate.

The protein in the N-terminal section; belongs to the DEAD box helicase family. DDVD subfamily. In the C-terminal section; belongs to the type IA topoisomerase family. Monomer. Zn(2+) is required as a cofactor. Mg(2+) serves as cofactor.

Its subcellular location is the cytoplasm. The catalysed reaction is ATP + H2O = ADP + phosphate + H(+). In terms of biological role, modifies the topological state of DNA by introducing positive supercoils in an ATP-dependent process, increasing the linking number in steps of +1. Binds to single-stranded DNA, transiently cleaves and then rejoins the ends, introducing a positive supercoil in the process. The scissile phosphodiester is attacked by the catalytic tyrosine of the enzyme, resulting in the formation of a DNA-(5'-phosphotyrosyl)-enzyme intermediate. Probably involved in rewinding DNA strands in regions of the chromosome that have opened up to allow replication, transcription, DNA repair and/or for DNA protection. The chain is Reverse gyrase 1 from Aeropyrum pernix (strain ATCC 700893 / DSM 11879 / JCM 9820 / NBRC 100138 / K1).